Consider the following 1176-residue polypeptide: DNA-directed RNA polymerase subunit beta (1176 aa).

Positions Thr-13–Val-30 are enriched in polar residues. The tract at residues Thr-13–Asn-35 is disordered.

The protein belongs to the RNA polymerase beta chain family. As to quaternary structure, the RNAP catalytic core consists of 2 alpha, 1 beta, 1 beta' and 1 omega subunit. When a sigma factor is associated with the core the holoenzyme is formed, which can initiate transcription.

It catalyses the reaction RNA(n) + a ribonucleoside 5'-triphosphate = RNA(n+1) + diphosphate. Functionally, DNA-dependent RNA polymerase catalyzes the transcription of DNA into RNA using the four ribonucleoside triphosphates as substrates. This chain is DNA-directed RNA polymerase subunit beta, found in Mycobacterium marinum (strain ATCC BAA-535 / M).